The primary structure comprises 424 residues: ATP-sensitive inward rectifier potassium channel 8 (424 aa).

The Cytoplasmic segment spans residues 1-69 (MLARKSIIPE…IFTTLVDLKW (69 aa)). Residue serine 6 is modified to Phosphoserine. A helical transmembrane segment spans residues 70 to 94 (RHTLVIFTMSFLCSWLLFAIMWWLV). The Extracellular segment spans residues 95 to 126 (AFAHGDIYAYMEKSGMEKSGLESTVCVTNVRS). Residues 127 to 138 (FTSAFLFSIEVQ) constitute an intramembrane region (helical; Pore-forming). The pore-forming intramembrane region spans 139–145 (VTIGFGG). The Selectivity filter signature appears at 140 to 145 (TIGFGG). Residues 146–154 (RMMTEECPL) lie on the Extracellular side of the membrane. The helical transmembrane segment at 155–176 (AITVLILQNIVGLIINAVMLGC) threads the bilayer. Over 177-424 (IFMKTAQAHR…PEGNQNTSES (248 aa)) the chain is Cytoplasmic. Positions 375-424 (SHQNSLRKRNSMRRNNSMRRNNSIRRNNSSLMVPKVQFMTPEGNQNTSES) are disordered. Over residues 387–404 (RRNNSMRRNNSIRRNNSS) the composition is skewed to low complexity.

It belongs to the inward rectifier-type potassium channel (TC 1.A.2.1) family. KCNJ8 subfamily. In terms of assembly, interacts with ABCC9. As to expression, predominantly detected in fetal and adult heart.

It localises to the membrane. The catalysed reaction is K(+)(in) = K(+)(out). Its function is as follows. Inward rectifier potassium channels are characterized by a greater tendency to allow potassium to flow into the cell rather than out of it. Their voltage dependence is regulated by the concentration of extracellular potassium; as external potassium is raised, the voltage range of the channel opening shifts to more positive voltages. The inward rectification is mainly due to the blockage of outward current by internal magnesium. This channel is activated by internal ATP and can be blocked by external barium. Can form a sulfonylurea-sensitive but ATP-insensitive potassium channel with ABCC9. The polypeptide is ATP-sensitive inward rectifier potassium channel 8 (KCNJ8) (Homo sapiens (Human)).